The primary structure comprises 1688 residues: Voltage-dependent L-type calcium channel subunit alpha-1S (1688 aa).

Positions 1–24 (MDAMGSAAEEGTQKKKRRPLVPPP) are disordered. The Cytoplasmic portion of the chain corresponds to 1-51 (MDAMGSAAEEGTQKKKRRPLVPPPPRPPRALFCLGLQNPFRKFCINIVEWK). An I repeat occupies 38–335 (NPFRKFCINI…LVLGVLSGEF (298 aa)). The helical transmembrane segment at 52–70 (PFEMIILLTIFANCVALAI) threads the bilayer. Residues 71–88 (FLPMPEDDTNSTNSVLEK) lie on the Extracellular side of the membrane. Residue Asn-80 is glycosylated (N-linked (GlcNAc...) asparagine). Residues 89–108 (VEYIFLFIFTIESFLKIVAY) traverse the membrane as a helical segment. Residues 109–120 (GFILHTDAYLRN) lie on the Cytoplasmic side of the membrane. A helical membrane pass occupies residues 121-139 (GWNILDFTIVSVGVFSVLL). Residues 140 to 158 (EQISKLQGLPAPGKSSGFN) are Extracellular-facing. The helical transmembrane segment at 159–177 (VKALRAFRVLRPLRLVSGV) threads the bilayer. The Cytoplasmic segment spans residues 178–196 (PSLQVVLNSIIKAMIPLLH). The chain crosses the membrane as a helical span at residues 197–216 (IALLVLFMIIIYAIVGLELF). At 217–307 (SGKMHKTCYF…WVNDAIGNEW (91 aa)) the chain is on the extracellular side. N-linked (GlcNAc...) asparagine glycosylation occurs at Asn-255. Residue Glu-290 participates in Ca(2+) binding. The chain crosses the membrane as a helical span at residues 308 to 332 (PWIYFVSLILLGSFFVLNLVLGVLS). Over 333 to 431 (GEFTKEREKA…RKSRDLVKSR (99 aa)) the chain is Cytoplasmic. A binding to the beta subunit region spans residues 355-372 (QAMDEDLRGYLDWITHAE). One copy of the II repeat lies at 417-663 (HRLLRRKSRD…VFLAIAVDNL (247 aa)). A helical transmembrane segment spans residues 432–450 (FFYWLVIIIILLNTVIIAT). The Extracellular segment spans residues 451 to 465 (EHHHQPDSLTKAQDI). Residues 466 to 485 (ANEVLLALFTMEMIVKIYAL) form a helical membrane-spanning segment. Topologically, residues 486-493 (GFQSYFMS) are cytoplasmic. A helical transmembrane segment spans residues 494–512 (LFNRFDSFVVCTGLLEVML). The Extracellular segment spans residues 513–522 (VASDIMSPLG). A helical transmembrane segment spans residues 523-541 (ISVLRCIRLLRIFKITRYW). Residues 542–560 (TSLNNLVASLLNSVRSIAS) lie on the Cytoplasmic side of the membrane. A helical membrane pass occupies residues 561-580 (LLLLLFLFMIIFALLGMQMF). Over 581–635 (GGKFDFEDLEVRRSTFDTFPQALITVFQILTGEDWTAVMYNGIMAYGGPTYSGMS) the chain is Extracellular. Residue Glu-613 coordinates Ca(2+). The helical transmembrane segment at 636-660 (VCIYFIILFVCGNYILLNVFLAIAV) threads the bilayer. The Cytoplasmic segment spans residues 661 to 797 (DNLAEAENLT…VLCHRIINAT (137 aa)). 2 disordered regions span residues 672–696 (AQKA…TEEE) and 729–755 (EIKD…ISPR). Residues 740 to 749 (PGDDEEEEPE) are compositionally biased toward acidic residues. Residues 784–1066 (NKIRVLCHRI…IFVGFVIVTF (283 aa)) form an III repeat. The helical transmembrane segment at 798 to 816 (TFTNFILLFILLSSISLAA) threads the bilayer. Topologically, residues 817 to 832 (EDPIQPESFRNKVLSK) are extracellular. The helical transmembrane segment at 833–852 (LDIVFTVIFTTEIVLKMTAY) threads the bilayer. The Cytoplasmic segment spans residues 853–864 (GAFLHKGSFCRN). The helical transmembrane segment at 865–883 (SFNILDLSVVGVSLISMGI) threads the bilayer. Over 884–890 (ESSAISV) the chain is Extracellular. Residues 891–909 (VKILRVLRVLRPLRAINRA) traverse the membrane as a helical segment. The Cytoplasmic segment spans residues 910–928 (KGLKHVVQCLFVAIKTIGN). A helical transmembrane segment spans residues 929-948 (IVLVTTLLQFMFSCIGVQLF). The Extracellular portion of the chain corresponds to 949–1038 (KGKFYSCTDT…MGPIYNYRIE (90 aa)). The interval 986–1075 (RVWSHSDFHF…FQEQGEQEYK (90 aa)) is dihydropyridine binding. Glu-1012 serves as a coordination point for Ca(2+). Residues 1039–1063 (IAVFFIVYIILIAFFMMNIFVGFVI) form a helical membrane-spanning segment. Residues 1064–1116 (VTFQEQGEQEYKDCELDKNQRQCVQYALKARPLRRYIPKNPHQYKIWYVVTSS) lie on the Cytoplasmic side of the membrane. The IV repeat unit spans residues 1103 to 1371 (NPHQYKIWYV…LFVAVIMDNF (269 aa)). A helical membrane pass occupies residues 1117 to 1135 (YFEYLMFFLITLNTISLGM). Residues 1136 to 1150 (QHYGQTAEFSYMSDI) lie on the Extracellular side of the membrane. A helical membrane pass occupies residues 1151–1170 (LNVAFTGIFTVEMFLKLAAF). At 1171-1178 (KAKGYFGD) the chain is on the cytoplasmic side. A helical transmembrane segment spans residues 1179–1197 (PWNVFDFLIVIGSVIDVIL). Over 1198–1218 (SEIDTPGIPATPGAEESSRIS) the chain is Extracellular. Residues 1219–1237 (ITFFRLFRVLRLVKLLSRG) form a helical membrane-spanning segment. Topologically, residues 1238 to 1256 (EGVRTLLWTFIKSFQALPY) are cytoplasmic. Residues 1257–1276 (VALLIVMLFFIYAVIGMQVF) form a helical membrane-spanning segment. The Extracellular portion of the chain corresponds to 1277 to 1343 (GKIALVDGTH…GEEYTCGTSF (67 aa)). The interval 1324–1390 (LCDPMSDFQP…LGPHHLDEFK (67 aa)) is dihydropyridine binding. The interval 1336-1379 (EYTCGTSFAYFYFISFYMLCAFLIINLFVAVIMDNFDYLTRDWS) is phenylalkylamine binding. Residues 1344 to 1368 (AYFYFISFYMLCAFLIINLFVAVIM) traverse the membrane as a helical segment. Over 1369–1688 (DNFDYLTRDW…TNSSISQATN (320 aa)) the chain is Cytoplasmic. Disordered regions lie at residues 1635-1664 (PEPV…RLTT) and 1669-1688 (RVQQ…QATN). The segment covering 1678-1688 (DTNSSISQATN) has biased composition (polar residues).

This sequence belongs to the calcium channel alpha-1 subunit (TC 1.A.1.11) family. As to quaternary structure, multisubunit complex consisting of alpha-1, alpha-2, beta and delta subunits in a 1:1:1:1 ratio. The channel activity is directed by the pore-forming and voltage-sensitive alpha-1 subunit. In many cases, this subunit is sufficient to generate voltage-sensitive calcium channel activity. The auxiliary subunits beta and alpha-2/delta linked by a disulfide bridge regulate the channel activity. An additional gamma subunit is present only in skeletal muscle L-type channel. In terms of processing, phosphorylation by PKA stimulates the calcium channel function. Skeletal muscle specific.

Its subcellular location is the membrane. In terms of biological role, voltage-sensitive calcium channels (VSCC) mediate the entry of calcium ions into excitable cells and are also involved in a variety of calcium-dependent processes, including muscle contraction, gene expression, cell motility, cell division and cell death. The isoform alpha-1S gives rise to L-type calcium currents. Long-lasting (L-type) calcium channels belong to the 'high-voltage activated' (HVA) group. They are blocked by dihydropyridines (DHP), phenylalkylamines, and by benzothiazepines. Calcium channels containing the alpha-1S subunit play an important role in excitation-contraction coupling in skele|tal muscle. This is Voltage-dependent L-type calcium channel subunit alpha-1S from Aquarana catesbeiana (American bullfrog).